We begin with the raw amino-acid sequence, 267 residues long: NAD kinase (267 aa).

The active-site Proton acceptor is D45. NAD(+) contacts are provided by residues 45–46, 121–122, K147, D149, 160–165, and A184; these read DG, NE, and TAYSKS.

The protein belongs to the NAD kinase family. Requires a divalent metal cation as cofactor.

It localises to the cytoplasm. It catalyses the reaction NAD(+) + ATP = ADP + NADP(+) + H(+). Its function is as follows. Involved in the regulation of the intracellular balance of NAD and NADP, and is a key enzyme in the biosynthesis of NADP. Catalyzes specifically the phosphorylation on 2'-hydroxyl of the adenosine moiety of NAD to yield NADP. The chain is NAD kinase from Lactobacillus gasseri (strain ATCC 33323 / DSM 20243 / BCRC 14619 / CIP 102991 / JCM 1131 / KCTC 3163 / NCIMB 11718 / NCTC 13722 / AM63).